The sequence spans 831 residues: V-type proton ATPase subunit a (831 aa).

The Cytoplasmic segment spans residues 1 to 418; sequence MSPSLFRSEE…DSYGIATYRE (418 aa). The helical transmembrane segment at 419–437 threads the bilayer; it reads VNHGIVAIVTFPFLFAIMF. At 438-439 the chain is on the vacuolar side; the sequence is GD. Residues 440–456 traverse the membrane as a helical segment; the sequence is LGHGAIMASVALMFVLY. The Cytoplasmic portion of the chain corresponds to 457–471; it reads EKTLGAKKDLDEIVG. The helical transmembrane segment at 472-501 threads the bilayer; it reads MVFYGRYIVLLMGLFSMYVGFVYNDLFSKP. Residues 502-548 lie on the Vacuolar side of the membrane; sequence MSIFSSRWVWPVKSEEAIARAVQVGTYPIGIDPTWHSADNNLLFMNS. Residues 549 to 568 form a helical membrane-spanning segment; that stretch reads YKMKLSIILGVIHMTFCLFL. Residues 569 to 586 are Cytoplasmic-facing; it reads SLSNYRFFKRKLDIYAVF. A helical transmembrane segment spans residues 587–607; sequence VPSLIFLEAIFGYLVITIVYK. Residues 608-650 lie on the Vacuolar side of the membrane; sequence WCIDWKAKDLQPPSLLNMLILMFLSPGTLEDQLYPGQKYLQVG. Residues 651-670 form a helical membrane-spanning segment; sequence LVIAALICVPWLLIVKPFVL. The Cytoplasmic segment spans residues 671–723; the sequence is WRRHSNEENKYQSLNSDLPNVDEADALMAVDSQEKQAEPFELGEVVIHQVIHT. A helical transmembrane segment spans residues 724–748; it reads IEFCLGCVSHTASYLRLWALSLAHN. Residues 749–769 are Vacuolar-facing; it reads QLSSVLWNMTLANGFRMTGIV. A helical transmembrane segment spans residues 770–808; sequence GSIFVVILFGFWFIATCVVLVAMEGTSAMLHSLRLHWVE. Topologically, residues 809 to 831 are cytoplasmic; the sequence is GMSKHFEGEGYAFTPFTFKVTAE.

This sequence belongs to the V-ATPase 116 kDa subunit family. V-ATPase is a heteromultimeric enzyme composed of a peripheral catalytic V1 complex (components A to H) attached to an integral membrane V0 proton pore complex (components: a, c, c', c'', d, e, f and VOA1).

The protein localises to the vacuole membrane. Functionally, subunit of the V0 complex of vacuolar(H+)-ATPase (V-ATPase), a multisubunit enzyme composed of a peripheral complex (V1) that hydrolyzes ATP and a membrane integral complex (V0) that translocates protons. V-ATPase is responsible for acidifying and maintaining the pH of intracellular compartments. The sequence is that of V-type proton ATPase subunit a (vph1) from Schizosaccharomyces pombe (strain 972 / ATCC 24843) (Fission yeast).